Here is a 1026-residue protein sequence, read N- to C-terminus: Multidrug resistance protein MdtC (1026 aa).

11 consecutive transmembrane segments (helical) span residues 15–35 (ILIA…LPVA), 333–353 (EVEE…FLFL), 360–380 (LIPA…MYLC), 387–407 (LSLM…IVVL), 431–451 (VGFT…PLLL), 463–483 (FAVT…TLTP), 528–548 (LVGV…IAIP), 853–873 (LILI…LYES), 897–917 (LFNA…IGIV), 953–973 (PIMM…LSGG), and 984–1004 (ITIV…TPVV).

This sequence belongs to the resistance-nodulation-cell division (RND) (TC 2.A.6) family. MdtC subfamily. In terms of assembly, part of a tripartite efflux system composed of MdtA, MdtB and MdtC. MdtC forms a heteromultimer with MdtB.

It is found in the cell inner membrane. The protein is Multidrug resistance protein MdtC of Salmonella gallinarum (strain 287/91 / NCTC 13346).